The sequence spans 250 residues: Endonuclease NucS 2 (250 aa).

The protein belongs to the NucS endonuclease family.

It localises to the cytoplasm. Its function is as follows. Cleaves both 3' and 5' ssDNA extremities of branched DNA structures. In Halobacterium salinarum (strain ATCC 700922 / JCM 11081 / NRC-1) (Halobacterium halobium), this protein is Endonuclease NucS 2.